A 570-amino-acid polypeptide reads, in one-letter code: Probable D-xylulose kinase A (570 aa).

The substrate site is built by histidine 98, aspartate 279, and asparagine 280. ATP-binding positions include tryptophan 363, 470 to 471 (GG), and asparagine 474.

It belongs to the FGGY kinase family.

Its subcellular location is the cytoplasm. The catalysed reaction is D-xylulose + ATP = D-xylulose 5-phosphate + ADP + H(+). Functionally, highly specific D-xylulose kinase which participates in the catabolism of xylose. Xylose is a major component of hemicelluloses such as xylan. Most fungi utilize D-xylose via three enzymatic reactions, xylose reductase (XR), xylitol dehydrogenase (XDH), and xylulokinase, to form xylulose 5-phosphate, which enters pentose phosphate pathway. This Arthroderma otae (strain ATCC MYA-4605 / CBS 113480) (Microsporum canis) protein is Probable D-xylulose kinase A (xkiA).